Here is a 115-residue protein sequence, read N- to C-terminus: Large ribosomal subunit protein bL19 (115 aa).

Belongs to the bacterial ribosomal protein bL19 family.

This protein is located at the 30S-50S ribosomal subunit interface and may play a role in the structure and function of the aminoacyl-tRNA binding site. This chain is Large ribosomal subunit protein bL19, found in Lactobacillus delbrueckii subsp. bulgaricus (strain ATCC BAA-365 / Lb-18).